Here is a 162-residue protein sequence, read N- to C-terminus: Ribosome maturation factor RimP (162 aa).

The protein belongs to the RimP family.

The protein resides in the cytoplasm. Required for maturation of 30S ribosomal subunits. This chain is Ribosome maturation factor RimP, found in Beutenbergia cavernae (strain ATCC BAA-8 / DSM 12333 / CCUG 43141 / JCM 11478 / NBRC 16432 / NCIMB 13614 / HKI 0122).